Consider the following 125-residue polypeptide: NADPH-dependent 7-cyano-7-deazaguanine reductase (125 aa).

The active-site Thioimide intermediate is Cys41. The active-site Proton donor is the Asp48. Substrate contacts are provided by residues 63-65 and 82-83; these read IEL and HE.

Belongs to the GTP cyclohydrolase I family. QueF type 1 subfamily.

It localises to the cytoplasm. It carries out the reaction 7-aminomethyl-7-carbaguanine + 2 NADP(+) = 7-cyano-7-deazaguanine + 2 NADPH + 3 H(+). The protein operates within tRNA modification; tRNA-queuosine biosynthesis. Functionally, catalyzes the NADPH-dependent reduction of 7-cyano-7-deazaguanine (preQ0) to 7-aminomethyl-7-deazaguanine (preQ1). The polypeptide is NADPH-dependent 7-cyano-7-deazaguanine reductase (Sulfurovum sp. (strain NBC37-1)).